Consider the following 246-residue polypeptide: Salivary antigen SP32 (246 aa).

Positions methionine 1 to serine 23 are cleaved as a signal peptide. The disordered stretch occupies residues aspartate 51–proline 160. Residues valine 65–arginine 78 are compositionally biased toward basic and acidic residues. Polar residues predominate over residues glutamine 79–arginine 124. A compositionally biased stretch (basic and acidic residues) spans glutamine 141–lysine 155.

As to quaternary structure, interacts with human DSG1. Interacts with human DSG3. Salivary gland (at protein level).

The protein resides in the secreted. Functionally, down-regulates the expression of CD86 and HLA-DR on the surface of lipopolysaccharide (LPS)-stimulated human peripheral blood mononuclear cells (PBMCs). Reduces LPS-induced secretion of IL-1beta/IL1B in human PBMCs. Reduces LPS-induced secretion of various cytokines, such as IL-1beta, TNF-alpha/TNF, MCP-1/CCL2, IL6, IL27 and IL-1alpha/IL1A, in host cultured macrophages probably via inhibition of NF-kappa-B signaling pathway. Reduces production of IFN-gamma/IFNG, IL4 and IL6 in human lymphocytes activated with PMA/ionomycin. Exhibits anti-inflammatory activity in carrageenan-induced paw edema model in rats. The protein is Salivary antigen SP32 of Phlebotomus papatasi (Sandfly).